A 516-amino-acid polypeptide reads, in one-letter code: Flavonoid 3',5'-hydroxylase (516 aa).

Position 453 (cysteine 453) interacts with heme.

This sequence belongs to the cytochrome P450 family. The cofactor is heme.

The enzyme catalyses a 3',5'-unsubstituted flavanone + 2 reduced [NADPH--hemoprotein reductase] + 2 O2 = a 3',5'-dihydroxyflavanone + 2 oxidized [NADPH--hemoprotein reductase] + 2 H2O + 2 H(+). The protein operates within pigment biosynthesis; anthocyanin biosynthesis. Functionally, catalyzes the 3'5'-hydroxylation of naringenin and eriodictyol to form 5,7,3,'4',5'-pentahydroxyflavanone and 3',5'-hydroxylation of dihydrokaempferol and dihydroquercetin to form dihydromyricetin. The chain is Flavonoid 3',5'-hydroxylase (CYP75A4) from Gentiana triflora (Clustered gentian).